The following is a 1783-amino-acid chain: Doublecortin domain-containing protein 1 (1783 aa).

Residues 93 to 133 are disordered; the sequence is GLQDCSTHQTASDHSHDEISDLDSYKSNSKNNSCSISASKR. Positions 117 to 131 are enriched in low complexity; sequence YKSNSKNNSCSISAS. The 85-residue stretch at 168–252 folds into the Doublecortin 1 domain; that stretch reads KLQPRVIKVT…FLNPFKKIKD (85 aa). Positions 702-800 constitute a Ricin B-type lectin 1 domain; the sequence is WLITKTGMIL…HIHHGAWTTA (99 aa). Residues 860 to 880 form a disordered region; that stretch reads ASAQRWAIKHEGTSKPGQWKH. Residues 925–1015 enclose the Doublecortin 2 domain; sequence PICKTTEPYA…ELWINPDLSI (91 aa). A Ricin B-type lectin 2 domain is found at 1151–1266; sequence SCSPKHSKLH…GAANQKWHYM (116 aa).

Interacts with dynein intermediate chain, tubulin, RAB8A, RAB3IP, NUDC, PAFAH1B1 and DCTN1.

The protein resides in the midbody. Its subcellular location is the midbody ring. It localises to the cytoplasm. It is found in the cytoskeleton. The protein localises to the spindle. Its function is as follows. Microtubule-binding protein which plays an important role in mediating dynein-dependent transport of RAB8A-positive vesicles to the midbody during cytokinesis. This Homo sapiens (Human) protein is Doublecortin domain-containing protein 1.